The primary structure comprises 66 residues: Large ribosomal subunit protein bL31 (66 aa).

The Zn(2+) site is built by cysteine 16, cysteine 18, cysteine 36, and cysteine 39.

This sequence belongs to the bacterial ribosomal protein bL31 family. Type A subfamily. Part of the 50S ribosomal subunit. The cofactor is Zn(2+).

Binds the 23S rRNA. This is Large ribosomal subunit protein bL31 from Moorella thermoacetica (strain ATCC 39073 / JCM 9320).